A 627-amino-acid chain; its full sequence is Altered inheritance of mitochondria protein 9, mitochondrial (627 aa).

The N-terminal 43 residues, 1 to 43, are a transit peptide targeting the mitochondrion; the sequence is MIRYTVAGHSRRCVVGASKRVGAIKCITVAATKRFISNKSNEV.

Belongs to the AIM9 family.

It is found in the mitochondrion. The protein is Altered inheritance of mitochondria protein 9, mitochondrial (AIM9) of Saccharomyces cerevisiae (strain JAY291) (Baker's yeast).